The chain runs to 432 residues: T-box transcription factor T (432 aa).

Residues 49–217 (LWTRFKELTN…HNPFAKAFLD (169 aa)) constitute a DNA-binding region (T-box). The interval 274 to 306 (CERYSSLRNHRSAPYPSPYTHRNNSPNNLADNS) is disordered. Residues 293–306 (THRNNSPNNLADNS) are compositionally biased toward polar residues.

In terms of assembly, when not bound to DNA, exists as a monomer. Binds DNA as a dimer. In terms of tissue distribution, expressed in presumptive mesodermal cells around the blastopore, and then in the notochord.

It is found in the nucleus. Involved in the transcriptional regulation of genes required for mesoderm formation and differentiation. Binds to the palindromic T site 5'-TTCACACCTAGGTGTGAA-3' DNA sequence. Causes dorsal mesodermal differentiation of animal cap ectoderm when co-expressed with wnt8 and noggin. None of these molecules causes dorsal mesoderm formation when expressed alone. Establishes the left/right axis at early gastrula stage by directly up-regulating mesodermal expression of zic3. The polypeptide is T-box transcription factor T (Xenopus laevis (African clawed frog)).